A 261-amino-acid chain; its full sequence is Carbonic anhydrase 1 (261 aa).

The disordered stretch occupies residues 1 to 40; that stretch reads MASPDWGYDDKNGPEQWSKLYPIANGNNQSPVDIKTSETK. An N-acetylalanine modification is found at Ala-2. In terms of domain architecture, Alpha-carbonic anhydrase spans 4–261; sequence PDWGYDDKNG…LKGRTVRASF (258 aa). The active-site Proton donor/acceptor is His-65. Positions 95, 97, and 120 each coordinate Zn(2+). Residues Thr-200 and 200–201 contribute to the substrate site; that span reads TH. Positions 241–261 are disordered; that stretch reads PMQHNNRPTQPLKGRTVRASF.

Belongs to the alpha-carbonic anhydrase family. Zn(2+) serves as cofactor.

It localises to the cytoplasm. The enzyme catalyses hydrogencarbonate + H(+) = CO2 + H2O. It catalyses the reaction urea = cyanamide + H2O. With respect to regulation, inhibited by acetazolamide. Catalyzes the reversible hydration of carbon dioxide. Can hydrate cyanamide to urea. This is Carbonic anhydrase 1 (CA1) from Pan troglodytes (Chimpanzee).